The primary structure comprises 193 residues: Putative manganese efflux pump MntP (193 aa).

Helical transmembrane passes span 6–26, 41–61, 65–85, 107–127, 132–152, and 169–189; these read LLGL…AVGI, YHFG…GTGI, TQSY…ANMI, LIIL…SLSM, IWYP…FGML, and VLGG…NGVF.

The protein belongs to the MntP (TC 9.B.29) family.

Its subcellular location is the cell inner membrane. Its function is as follows. Probably functions as a manganese efflux pump. The sequence is that of Putative manganese efflux pump MntP from Desulfotalea psychrophila (strain LSv54 / DSM 12343).